A 351-amino-acid chain; its full sequence is Serine/threonine-protein kinase ZRK1 (351 aa).

The Protein kinase domain maps to 60 to 347 (FDSSCFVSQD…KELKQIEASL (288 aa)). ATP contacts are provided by residues 66–74 (VSQDVYYKW) and lysine 87. Aspartate 191 acts as the Proton acceptor in catalysis.

Belongs to the protein kinase superfamily. Ser/Thr protein kinase family. ZRK subfamily. Component of a stable high-order oligomeric complex made of RKS1 and RPP13L4/ZAR1 which recruits Xanthomonas campestris effector XopAC/AvrAC-mediated uridylylated PBL2 in the presence of ATP to form a wheel-like pentameric resistosome; this complex triggers immunity toward X.campestris in vascular tissues. Interacts with RPP13L4/ZAR1 and uridylylated PBL2. As to expression, expressed at high levels in germinating seeds and at lower levels in adult leaves.

It carries out the reaction L-seryl-[protein] + ATP = O-phospho-L-seryl-[protein] + ADP + H(+). The enzyme catalyses L-threonyl-[protein] + ATP = O-phospho-L-threonyl-[protein] + ADP + H(+). In terms of biological role, serine/threonine-protein kinase that confers a broad-spectrum quantitative disease resistance (QDR) to the pathogenic biotrophic bacteria Xanthomonas campestris (e.g. pv. campestris (Xcc), pv. raphani, pv. armoriaceae and pv. incanae) by restricting bacterial spread to the vascular system from the infection site; X.campestris causes black rot disease in crops. Seems to not have any kinase activity. The chain is Serine/threonine-protein kinase ZRK1 from Arabidopsis thaliana (Mouse-ear cress).